Reading from the N-terminus, the 155-residue chain is Aspartate carbamoyltransferase regulatory chain (155 aa).

4 residues coordinate Zn(2+): Cys112, Cys117, Cys140, and Cys143.

The protein belongs to the PyrI family. As to quaternary structure, contains catalytic and regulatory chains. Requires Zn(2+) as cofactor.

Functionally, involved in allosteric regulation of aspartate carbamoyltransferase. The protein is Aspartate carbamoyltransferase regulatory chain of Phocaeicola vulgatus (strain ATCC 8482 / DSM 1447 / JCM 5826 / CCUG 4940 / NBRC 14291 / NCTC 11154) (Bacteroides vulgatus).